Here is a 270-residue protein sequence, read N- to C-terminus: Replication protein A 32 kDa subunit (270 aa).

At methionine 1 the chain carries N-acetylmethionine. A phosphoserine; by PRKDC mark is found at serine 4 and serine 8. Residue threonine 21 is modified to Phosphothreonine; by PRKDC. The disordered stretch occupies residues 21–40; the sequence is TQSPGGFGSPAPSQAEKKSR. The residue at position 23 (serine 23) is a Phosphoserine; by CDK2. Serine 29 is modified (phosphoserine; by CDK1). Serine 33 is subject to Phosphoserine; by PRKDC. Residues lysine 37 and lysine 38 each participate in a glycyl lysine isopeptide (Lys-Gly) (interchain with G-Cter in ubiquitin) cross-link. The segment at residues 74 to 148 is a DNA-binding region (OB); sequence VTIVGIIRHA…KSLVAFKIMP (75 aa). The interaction with RAD52, TIPIN, UNG and XPA stretch occupies residues 187–270; it reads GMSEAGNFGG…DDHFKSTDAE (84 aa).

This sequence belongs to the replication factor A protein 2 family. Component of the replication protein A complex (RPA/RP-A), a heterotrimeric complex composed of RPA1, RPA2 and RPA3. Interacts with PRPF19; the PRP19-CDC5L complex is recruited to the sites of DNA repair where it ubiquitinates the replication protein A complex (RPA). Interacts with SERTAD3. Interacts with TIPIN. Interacts with TIMELESS. Interacts with PPP4R2; the interaction is direct, DNA damage-dependent and mediates the recruitment of the PP4 catalytic subunit PPP4C. Interacts (hyperphosphorylated) with RAD51. Interacts with SMARCAL1; the interaction is direct and mediates the recruitment to the RPA complex of SMARCAL1. Interacts with RAD52 and XPA; those interactions are direct and associate RAD52 and XPA to the RPA complex. Interacts with FBH1. Interacts with ETAA1; the interaction is direct and promotes ETAA1 recruitment at stalled replication forks. Interacts with DDI2. Interacts (in unphosphorylated form via N-terminus) with EIF4EBP3; the interaction enhances EIF4EBP3-mediated inhibition of EIF4E-mediated mRNA nuclear export. Differentially phosphorylated throughout the cell cycle, becoming phosphorylated at the G1-S transition and dephosphorylated in late mitosis. Mainly phosphorylated at Ser-23 and Ser-29, by cyclin A-CDK2 and cyclin B-CDK1, respectively during DNA replication and mitosis. Dephosphorylation may require the serine/threonine-protein phosphatase 4. Phosphorylation at Ser-23 and Ser-29 is a prerequisite for further phosphorylation. Becomes hyperphosphorylated on additional residues including Ser-4, Ser-8, Thr-21 and Ser-33 in response to DNA damage. Hyperphosphorylation is mediated by ATM, ATR and PRKDC. Primarily recruited to DNA repair nuclear foci as a hypophosphorylated form it undergoes subsequent hyperphosphorylation, catalyzed by ATR. Hyperphosphorylation is required for RAD51 recruitment to chromatin and efficient DNA repair. Phosphorylation at Thr-21 depends upon RFWD3 presence. In terms of processing, DNA damage-induced 'Lys-63'-linked polyubiquitination by PRPF19 mediates ATRIP recruitment to the RPA complex at sites of DNA damage and activation of ATR. Ubiquitinated by RFWD3 at stalled replication forks in response to DNA damage: ubiquitination by RFWD3 does not lead to degradation by the proteasome and promotes removal of the RPA complex from stalled replication forks, promoting homologous recombination.

The protein localises to the nucleus. It localises to the PML body. Its function is as follows. As part of the heterotrimeric replication protein A complex (RPA/RP-A), binds and stabilizes single-stranded DNA intermediates, that form during DNA replication or upon DNA stress. It prevents their reannealing and in parallel, recruits and activates different proteins and complexes involved in DNA metabolism. Thereby, it plays an essential role both in DNA replication and the cellular response to DNA damage. In the cellular response to DNA damage, the RPA complex controls DNA repair and DNA damage checkpoint activation. Through recruitment of ATRIP activates the ATR kinase a master regulator of the DNA damage response. It is required for the recruitment of the DNA double-strand break repair factors RAD51 and RAD52 to chromatin in response to DNA damage. Also recruits to sites of DNA damage proteins like XPA and XPG that are involved in nucleotide excision repair and is required for this mechanism of DNA repair. Also plays a role in base excision repair (BER) probably through interaction with UNG. Also recruits SMARCAL1/HARP, which is involved in replication fork restart, to sites of DNA damage. May also play a role in telomere maintenance. The protein is Replication protein A 32 kDa subunit (RPA2) of Pongo abelii (Sumatran orangutan).